A 393-amino-acid polypeptide reads, in one-letter code: UDP-glucose 6-dehydrogenase (393 aa).

Positions 11, 31, 36, 85, 120, and 147 each coordinate NAD(+). Substrate-binding positions include 143-147, lysine 199, asparagine 203, 244-248, and glycine 252; these read EFLRE and YNNPS. Position 254 (tyrosine 254) interacts with NAD(+). Cysteine 255 (nucleophile) is an active-site residue. Lysine 258 contacts NAD(+). Lysine 309 provides a ligand contact to substrate. Position 316 (arginine 316) interacts with NAD(+).

This sequence belongs to the UDP-glucose/GDP-mannose dehydrogenase family. In terms of assembly, homodimer.

The enzyme catalyses UDP-alpha-D-glucose + 2 NAD(+) + H2O = UDP-alpha-D-glucuronate + 2 NADH + 3 H(+). The protein operates within nucleotide-sugar biosynthesis; UDP-alpha-D-glucuronate biosynthesis; UDP-alpha-D-glucuronate from UDP-alpha-D-glucose: step 1/1. Its pathway is capsule biogenesis; capsule polysaccharide biosynthesis. In terms of biological role, catalyzes the formation of UDP-glucuronic acid which is required for capsular polysaccharide synthesis. Does not catalyze the formation of glucuronamide moiety of the capsular polysaccharide. The protein is UDP-glucose 6-dehydrogenase of Campylobacter jejuni subsp. jejuni serotype O:2 (strain ATCC 700819 / NCTC 11168).